The following is a 172-amino-acid chain: Protein-export protein SecB (172 aa).

The protein belongs to the SecB family. Homotetramer, a dimer of dimers. One homotetramer interacts with 1 SecA dimer.

The protein resides in the cytoplasm. One of the proteins required for the normal export of preproteins out of the cell cytoplasm. It is a molecular chaperone that binds to a subset of precursor proteins, maintaining them in a translocation-competent state. It also specifically binds to its receptor SecA. This Maricaulis maris (strain MCS10) (Caulobacter maris) protein is Protein-export protein SecB.